The following is a 366-amino-acid chain: S-adenosylmethionine:tRNA ribosyltransferase-isomerase (366 aa).

It belongs to the QueA family. As to quaternary structure, monomer.

The protein localises to the cytoplasm. It carries out the reaction 7-aminomethyl-7-carbaguanosine(34) in tRNA + S-adenosyl-L-methionine = epoxyqueuosine(34) in tRNA + adenine + L-methionine + 2 H(+). It functions in the pathway tRNA modification; tRNA-queuosine biosynthesis. Functionally, transfers and isomerizes the ribose moiety from AdoMet to the 7-aminomethyl group of 7-deazaguanine (preQ1-tRNA) to give epoxyqueuosine (oQ-tRNA). In Parasynechococcus marenigrum (strain WH8102), this protein is S-adenosylmethionine:tRNA ribosyltransferase-isomerase.